The primary structure comprises 523 residues: 2-isopropylmalate synthase (523 aa).

A Pyruvate carboxyltransferase domain is found at 5 to 267; that stretch reads VIIFDTTLRD…ETGINAKEIH (263 aa). Residues Asp14, His202, His204, and Asn238 each coordinate Mn(2+). Residues 392–523 form a regulatory domain region; that stretch reads QLKQLVVHSD…QQKARSLGGV (132 aa).

This sequence belongs to the alpha-IPM synthase/homocitrate synthase family. LeuA type 1 subfamily. As to quaternary structure, homodimer. The cofactor is Mn(2+).

The protein resides in the cytoplasm. The catalysed reaction is 3-methyl-2-oxobutanoate + acetyl-CoA + H2O = (2S)-2-isopropylmalate + CoA + H(+). Its pathway is amino-acid biosynthesis; L-leucine biosynthesis; L-leucine from 3-methyl-2-oxobutanoate: step 1/4. Catalyzes the condensation of the acetyl group of acetyl-CoA with 3-methyl-2-oxobutanoate (2-ketoisovalerate) to form 3-carboxy-3-hydroxy-4-methylpentanoate (2-isopropylmalate). This is 2-isopropylmalate synthase from Shewanella woodyi (strain ATCC 51908 / MS32).